A 411-amino-acid polypeptide reads, in one-letter code: Methylthioribose-1-phosphate isomerase (411 aa).

Position 2 is an N-acetylserine (serine 2). The active-site Proton donor is aspartate 280. A Phosphoserine modification is found at serine 351.

The protein belongs to the eIF-2B alpha/beta/delta subunits family. MtnA subfamily. As to quaternary structure, homodimer.

It is found in the cytoplasm. It localises to the nucleus. The catalysed reaction is 5-(methylsulfanyl)-alpha-D-ribose 1-phosphate = 5-(methylsulfanyl)-D-ribulose 1-phosphate. It functions in the pathway amino-acid biosynthesis; L-methionine biosynthesis via salvage pathway; L-methionine from S-methyl-5-thio-alpha-D-ribose 1-phosphate: step 1/6. Catalyzes the interconversion of methylthioribose-1-phosphate (MTR-1-P) into methylthioribulose-1-phosphate (MTRu-1-P). This is Methylthioribose-1-phosphate isomerase from Saccharomyces cerevisiae (strain RM11-1a) (Baker's yeast).